The sequence spans 395 residues: Phosphonoacetaldehyde reductase (395 aa).

Fe cation-binding residues include aspartate 199, histidine 268, and histidine 282.

This sequence belongs to the iron-containing alcohol dehydrogenase family. Fe cation is required as a cofactor.

The enzyme catalyses 2-hydroxyethylphosphonate + NAD(+) = phosphonoacetaldehyde + NADH + H(+). It participates in secondary metabolite biosynthesis; bialaphos biosynthesis. In terms of biological role, catalyzes the reduction of phosphonoacetaldehyde to 2-hydroxyethylphosphonate, a step in the biosynthesis of phosphinothricin tripeptide. Phosphinothricin tripeptide (PTT), also known as bialaphos (BA), is a natural-product antibiotic and potent herbicide. Can use both NAD and NADP but the preferred substrate is NAD. This chain is Phosphonoacetaldehyde reductase (phpC), found in Streptomyces viridochromogenes (strain DSM 40736 / JCM 4977 / BCRC 1201 / Tue 494).